The following is a 252-amino-acid chain: Isoprenyl transferase (252 aa).

Aspartate 32 is an active-site residue. Aspartate 32 lines the Mg(2+) pocket. Substrate is bound by residues 33–36 (GNGR), tryptophan 37, arginine 45, histidine 49, and 77–79 (STE). The Proton acceptor role is filled by asparagine 80. Substrate-binding positions include tryptophan 81, arginine 83, arginine 200, and 206–208 (RLS). Residue glutamate 219 participates in Mg(2+) binding.

The protein belongs to the UPP synthase family. Homodimer. Mg(2+) serves as cofactor.

Functionally, catalyzes the condensation of isopentenyl diphosphate (IPP) with allylic pyrophosphates generating different type of terpenoids. The sequence is that of Isoprenyl transferase from Oceanobacillus iheyensis (strain DSM 14371 / CIP 107618 / JCM 11309 / KCTC 3954 / HTE831).